Here is a 173-residue protein sequence, read N- to C-terminus: Probable chemoreceptor glutamine deamidase CheD (173 aa).

It belongs to the CheD family.

It catalyses the reaction L-glutaminyl-[protein] + H2O = L-glutamyl-[protein] + NH4(+). In terms of biological role, probably deamidates glutamine residues to glutamate on methyl-accepting chemotaxis receptors (MCPs), playing an important role in chemotaxis. This is Probable chemoreceptor glutamine deamidase CheD from Haloarcula marismortui (strain ATCC 43049 / DSM 3752 / JCM 8966 / VKM B-1809) (Halobacterium marismortui).